We begin with the raw amino-acid sequence, 600 residues long: Probable methyltransferase PMT21 (600 aa).

The Cytoplasmic segment spans residues 1–16; sequence MKYKDEKYEKAEKGSR. A helical; Signal-anchor for type II membrane protein membrane pass occupies residues 17–37; sequence ILPKTVLLILLCGLSFYLGGL. Residues 38-600 lie on the Lumenal side of the membrane; the sequence is YCGKNIIEVS…YSSNASSETN (563 aa). N-linked (GlcNAc...) asparagine glycosylation is present at asparagine 594.

This sequence belongs to the methyltransferase superfamily.

It is found in the endoplasmic reticulum membrane. The chain is Probable methyltransferase PMT21 (ERD3) from Arabidopsis thaliana (Mouse-ear cress).